We begin with the raw amino-acid sequence, 187 residues long: Elongation factor P (187 aa).

This sequence belongs to the elongation factor P family.

Its subcellular location is the cytoplasm. Its pathway is protein biosynthesis; polypeptide chain elongation. In terms of biological role, involved in peptide bond synthesis. Stimulates efficient translation and peptide-bond synthesis on native or reconstituted 70S ribosomes in vitro. Probably functions indirectly by altering the affinity of the ribosome for aminoacyl-tRNA, thus increasing their reactivity as acceptors for peptidyl transferase. This Corynebacterium diphtheriae (strain ATCC 700971 / NCTC 13129 / Biotype gravis) protein is Elongation factor P.